The chain runs to 237 residues: Ribonuclease PH (237 aa).

Residues arginine 86 and glycine 124 to arginine 126 each bind phosphate.

The protein belongs to the RNase PH family. Homohexameric ring arranged as a trimer of dimers.

The catalysed reaction is tRNA(n+1) + phosphate = tRNA(n) + a ribonucleoside 5'-diphosphate. Phosphorolytic 3'-5' exoribonuclease that plays an important role in tRNA 3'-end maturation. Removes nucleotide residues following the 3'-CCA terminus of tRNAs; can also add nucleotides to the ends of RNA molecules by using nucleoside diphosphates as substrates, but this may not be physiologically important. Probably plays a role in initiation of 16S rRNA degradation (leading to ribosome degradation) during starvation. The polypeptide is Ribonuclease PH (Tolumonas auensis (strain DSM 9187 / NBRC 110442 / TA 4)).